Consider the following 39-residue polypeptide: Hementin (39 aa).

It depends on a divalent metal cation as a cofactor. In terms of tissue distribution, expressed mainly in the posterior salivary glands and, to a lesser extent, in the anterior salivary glands and secreted into the proboscis (at protein level).

It localises to the secreted. With respect to regulation, inhibited by EDTA, cysteine, DTT and sodium phosphate. Partially inhibited by EGTA, citrate, Tris and glycine. Not inhibited by DFP, PMSF, iodoacetic acid and leupeptin. Requires sodium chloride concentrations higher than 0.15 M for activity. In terms of biological role, metalloprotease with anticoagulant activity. Cleaves fibrinogen Aalpha (FGA), gamma (FGG) and Bbeta (FGB) chains after positions 'Asn-121', 'Lys-160' and 'Pro-102', respectively. Breaks down cross-linked and non-cross-linked fibrin clots. Prevents and reverts platelet aggregation induced by ADP and collagen. Prevents thrombin-induced platelet clotting. Does not affect plasma levels of coagulation factors prothrombin (F2), V (F5), VII (F7), VIII (F8), IX (F9), X (F10), XI (F11), XII (F12), plasma kallikrein (KLKB1) and kininogen-1 (KNG1). The polypeptide is Hementin (Haementeria ghilianii (Amazon leech)).